Consider the following 200-residue polypeptide: QLCLLQPLGSGGFGSVYKATYHGATVAVKQVKKSSKNRLASRQSFWAELNVARLQHNNVVRVVAASTCAPASQNSLGTIIMEYVGNITLHHVIYGTGDAWRQGEDDEGGCGRKALSMEETVCYSCDIMTGLAFLHSQDIVHLDLKPANIFITEQGVCKIGDFGCSQKLEEGLSQSPHVCQQGGTYTHRAPELLKGERVTA.

The 199-residue stretch at 2–200 folds into the Protein kinase domain; that stretch reads LCLLQPLGSG…ELLKGERVTA (199 aa). Residues 8-16 and K29 each bind ATP; that span reads LGSGGFGSV. The Proton acceptor role is filled by D143.

Belongs to the protein kinase superfamily. Ser/Thr protein kinase family.

It carries out the reaction L-seryl-[protein] + ATP = O-phospho-L-seryl-[protein] + ADP + H(+). The catalysed reaction is L-threonyl-[protein] + ATP = O-phospho-L-threonyl-[protein] + ADP + H(+). This is Serine/threonine-protein kinase mos (MOS) from Vultur gryphus (Andean condor).